Reading from the N-terminus, the 307-residue chain is Ribonuclease Z (307 aa).

7 residues coordinate Zn(2+): H64, H66, D68, H69, H141, D209, and H267. The active-site Proton acceptor is the D68.

It belongs to the RNase Z family. As to quaternary structure, homodimer. It depends on Zn(2+) as a cofactor.

It carries out the reaction Endonucleolytic cleavage of RNA, removing extra 3' nucleotides from tRNA precursor, generating 3' termini of tRNAs. A 3'-hydroxy group is left at the tRNA terminus and a 5'-phosphoryl group is left at the trailer molecule.. In terms of biological role, zinc phosphodiesterase, which displays some tRNA 3'-processing endonuclease activity. Probably involved in tRNA maturation, by removing a 3'-trailer from precursor tRNA. This chain is Ribonuclease Z, found in Thermoplasma acidophilum (strain ATCC 25905 / DSM 1728 / JCM 9062 / NBRC 15155 / AMRC-C165).